A 382-amino-acid polypeptide reads, in one-letter code: MSTWLLPENIADVLPSEARKIEELRRRLLDRFRSYGYEMVMPPLLEYLESLLTSGGADLRLRTFKLVDQLSGRTLGLRADITPQVARIDAHLLNRQGVTRLCYAGHVMHTRPRGLHATREQIQIGAEIYGHAGLEADLEIQQLMLDALHLAGLSRIRLDLGHAGVLAALLARDAQAAERGESLYDALSGKDVPLLNELTDDLGADTRAALRALPNLYGDASVLAEARTRLPVLPEITRALDDLAQLASQAKGVEVAIDLADLRGYAYHSGAMFSAYIDGVPNAIARGGRYDHVGQAYGRSRPATGFSLDLRELARISPVEARGTAILAPWAQDDALGAAVAALRDAGEVVIQALPGHDHVLDEFACDRSLVERNGAWVVEPR.

Belongs to the class-II aminoacyl-tRNA synthetase family. HisZ subfamily. Heteromultimer composed of HisG and HisZ subunits.

It localises to the cytoplasm. It functions in the pathway amino-acid biosynthesis; L-histidine biosynthesis; L-histidine from 5-phospho-alpha-D-ribose 1-diphosphate: step 1/9. In terms of biological role, required for the first step of histidine biosynthesis. May allow the feedback regulation of ATP phosphoribosyltransferase activity by histidine. The protein is ATP phosphoribosyltransferase regulatory subunit of Burkholderia cenocepacia (strain HI2424).